Here is a 385-residue protein sequence, read N- to C-terminus: Alanine racemase (385 aa).

The Proton acceptor; specific for D-alanine role is filled by Lys40. Residue Lys40 is modified to N6-(pyridoxal phosphate)lysine. Substrate is bound at residue Arg139. Tyr268 functions as the Proton acceptor; specific for L-alanine in the catalytic mechanism. Met315 lines the substrate pocket.

This sequence belongs to the alanine racemase family. Requires pyridoxal 5'-phosphate as cofactor.

It catalyses the reaction L-alanine = D-alanine. The protein operates within amino-acid biosynthesis; D-alanine biosynthesis; D-alanine from L-alanine: step 1/1. In terms of biological role, catalyzes the interconversion of L-alanine and D-alanine. May also act on other amino acids. The sequence is that of Alanine racemase (alr) from Anoxybacillus flavithermus (strain DSM 21510 / WK1).